The sequence spans 271 residues: Solute carrier family 66 member 2 (271 aa).

3 consecutive transmembrane segments (helical) span residues 7 to 27 (GWLL…AMVF), 49 to 69 (FSTH…LFWF), and 72 to 92 (HFES…LLML). The region spanning 14–80 (HQLVSWVAAG…RHFESPLLWQ (67 aa)) is the PQ-loop 1 domain. The residue at position 110 (S110) is a Phosphoserine. 3 consecutive transmembrane segments (helical) span residues 143-163 (FADY…ITYL), 168-188 (ALFV…LGVP), and 232-252 (VCGL…YAFA). Positions 149–215 (CVLAFTGVAG…MVLMWTSGDT (67 aa)) constitute a PQ-loop 2 domain.

The protein resides in the membrane. This Rattus norvegicus (Rat) protein is Solute carrier family 66 member 2 (Slc66a2).